We begin with the raw amino-acid sequence, 501 residues long: Acetylcholine receptor subunit beta (501 aa).

The N-terminal stretch at 1–23 (MTPGALLMLLGALGAPLAPGVRG) is a signal peptide. The Extracellular portion of the chain corresponds to 24-244 (SEAEGRLREK…VIFYLIIRRK (221 aa)). A disulfide bridge connects residues Cys151 and Cys165. N-linked (GlcNAc...) asparagine glycosylation is present at Asn164. A run of 3 helical transmembrane segments spans residues 245–269 (PLFY…VFYL), 277–295 (MGLS…LLLA), and 311–332 (YLMF…VLNL). Residues 333–469 (HHRSPHTHQM…WQFVAMVVDR (137 aa)) lie on the Cytoplasmic side of the membrane. Tyr390 is modified (phosphotyrosine; by Tyr-kinases). The helical transmembrane segment at 470-488 (LFLWTFIIFTSVGTLVIFL) threads the bilayer.

Belongs to the ligand-gated ion channel (TC 1.A.9) family. Acetylcholine receptor (TC 1.A.9.1) subfamily. Beta-1/CHRNB1 sub-subfamily. Pentamer of two alpha chains, and one each of the beta, delta, and gamma (in immature muscle) or epsilon (in mature muscle) chains. The muscle heteropentamer composed of alpha-1, beta-1, delta, epsilon subunits interacts with the alpha-conotoxin ImII.

It localises to the postsynaptic cell membrane. The protein localises to the cell membrane. The catalysed reaction is K(+)(in) = K(+)(out). The enzyme catalyses Na(+)(in) = Na(+)(out). Its function is as follows. After binding acetylcholine, the AChR responds by an extensive change in conformation that affects all subunits and leads to opening of an ion-conducting channel across the plasma membrane. This is Acetylcholine receptor subunit beta from Homo sapiens (Human).